The primary structure comprises 666 residues: Probable potassium transport system protein Kup (666 aa).

12 helical membrane passes run 16 to 36 (GFII…LYTM), 58 to 78 (ISLI…LVAL), 99 to 119 (TPWL…DGAL), 141 to 161 (IFQN…LLFA), 167 to 187 (TGVI…FLGI), 221 to 241 (IFIL…YSDL), 253 to 273 (WPFV…WILA), 292 to 312 (FTMH…QALI), 343 to 363 (TYIP…VLLF), 373 to 393 (YGLA…FFLI), 402 to 422 (VLLM…ASAV), and 424 to 444 (FMHG…IMTI).

Belongs to the HAK/KUP transporter (TC 2.A.72) family.

Its subcellular location is the cell membrane. It catalyses the reaction K(+)(in) + H(+)(in) = K(+)(out) + H(+)(out). Its function is as follows. Transport of potassium into the cell. Likely operates as a K(+):H(+) symporter. This chain is Probable potassium transport system protein Kup, found in Streptococcus agalactiae serotype V (strain ATCC BAA-611 / 2603 V/R).